A 220-amino-acid chain; its full sequence is Germin-like protein subfamily 2 member 4 (220 aa).

An N-terminal signal peptide occupies residues 1-21; the sequence is MDSRCFGFFFTLLSLNVIVLA. Cys31 and Cys46 are disulfide-bonded. Residues Asn51 and Asn69 are each glycosylated (N-linked (GlcNAc...) asparagine). Positions 58 to 209 constitute a Cupin type-1 domain; sequence FFAGIGKPAV…TFQIGTKEIE (152 aa). Mn(2+) is bound by residues His108, His110, Glu115, and His154.

It belongs to the germin family. Oligomer (believed to be a pentamer but probably hexamer).

It is found in the secreted. The protein resides in the extracellular space. The protein localises to the apoplast. Its function is as follows. May play a role in plant defense. Probably has no oxalate oxidase activity even if the active site is conserved. In Arabidopsis thaliana (Mouse-ear cress), this protein is Germin-like protein subfamily 2 member 4 (GLP10).